The primary structure comprises 151 residues: Phosphoribosyl-AMP cyclohydrolase (151 aa).

Mg(2+) is bound at residue aspartate 94. Residue cysteine 95 participates in Zn(2+) binding. Mg(2+)-binding residues include aspartate 96 and aspartate 98. Zn(2+) is bound by residues cysteine 112 and cysteine 119.

The protein belongs to the PRA-CH family. In terms of assembly, homodimer. Requires Mg(2+) as cofactor. It depends on Zn(2+) as a cofactor.

It localises to the cytoplasm. The enzyme catalyses 1-(5-phospho-beta-D-ribosyl)-5'-AMP + H2O = 1-(5-phospho-beta-D-ribosyl)-5-[(5-phospho-beta-D-ribosylamino)methylideneamino]imidazole-4-carboxamide. It functions in the pathway amino-acid biosynthesis; L-histidine biosynthesis; L-histidine from 5-phospho-alpha-D-ribose 1-diphosphate: step 3/9. Its function is as follows. Catalyzes the hydrolysis of the adenine ring of phosphoribosyl-AMP. The sequence is that of Phosphoribosyl-AMP cyclohydrolase from Rhodopseudomonas palustris (strain TIE-1).